The chain runs to 71 residues: Small ribosomal subunit protein bS21 (71 aa).

The span at 48–59 (KAAAAVKRHAKK) shows a compositional bias: basic residues. A disordered region spans residues 48–71 (KAAAAVKRHAKKVQRENRKFQRLY). Residues 60–71 (VQRENRKFQRLY) show a composition bias toward basic and acidic residues.

Belongs to the bacterial ribosomal protein bS21 family.

This chain is Small ribosomal subunit protein bS21, found in Saccharophagus degradans (strain 2-40 / ATCC 43961 / DSM 17024).